The following is a 562-amino-acid chain: Bifunctional coenzyme A synthase (562 aa).

Serine 177 and serine 182 each carry phosphoserine. Positions 179–357 are phosphopantetheine adenylyltransferase; that stretch reads VARSAKQPVR…HKRPELPPGC (179 aa). A DPCK domain is found at 359 to 562; the sequence is VIGLTGISGS…KRISEAPSDP (204 aa). An ATP-binding site is contributed by 364–371; the sequence is GISGSGKS.

It in the central section; belongs to the eukaryotic CoaD family. Monomer. In terms of processing, the N-terminus is blocked.

Its subcellular location is the cytoplasm. It is found in the mitochondrion matrix. It catalyses the reaction (R)-4'-phosphopantetheine + ATP + H(+) = 3'-dephospho-CoA + diphosphate. The enzyme catalyses 3'-dephospho-CoA + ATP = ADP + CoA + H(+). The protein operates within cofactor biosynthesis; coenzyme A biosynthesis; CoA from (R)-pantothenate: step 4/5. Its pathway is cofactor biosynthesis; coenzyme A biosynthesis; CoA from (R)-pantothenate: step 5/5. Functionally, bifunctional enzyme that catalyzes the fourth and fifth sequential steps of CoA biosynthetic pathway. The fourth reaction is catalyzed by the phosphopantetheine adenylyltransferase, coded by the coaD domain; the fifth reaction is catalyzed by the dephospho-CoA kinase, coded by the coaE domain. May act as a point of CoA biosynthesis regulation. In Sus scrofa (Pig), this protein is Bifunctional coenzyme A synthase.